The primary structure comprises 179 residues: Sec-independent protein translocase protein TatB (179 aa).

Residues 1–21 (MLDLGLSKMALIGVVALVVLG) form a helical membrane-spanning segment. Residues 101–115 (GAAGDAGSVGSPGSD) show a composition bias toward low complexity. The segment at 101–134 (GAAGDAGSVGSPGSDTPAAPSWRGSSAALAPKRR) is disordered.

The protein belongs to the TatB family. The Tat system comprises two distinct complexes: a TatABC complex, containing multiple copies of TatA, TatB and TatC subunits, and a separate TatA complex, containing only TatA subunits. Substrates initially bind to the TatABC complex, which probably triggers association of the separate TatA complex to form the active translocon.

It localises to the cell inner membrane. Functionally, part of the twin-arginine translocation (Tat) system that transports large folded proteins containing a characteristic twin-arginine motif in their signal peptide across membranes. Together with TatC, TatB is part of a receptor directly interacting with Tat signal peptides. TatB may form an oligomeric binding site that transiently accommodates folded Tat precursor proteins before their translocation. The sequence is that of Sec-independent protein translocase protein TatB from Burkholderia orbicola (strain AU 1054).